We begin with the raw amino-acid sequence, 596 residues long: Choline dehydrogenase, mitochondrial (596 aa).

The transit peptide at 1–34 (MWQVLRGWRKGWQSPRGALAWAVQGQPCPPCSRA) directs the protein to the mitochondrion. 44 to 73 (TFVVVGAGSAGCVLASRLTEDPNHRVLLLE) serves as a coordination point for FAD. Residue K438 is modified to N6-succinyllysine. Residues K486 and K498 each carry the N6-acetyllysine; alternate modification. K486 and K498 each carry N6-succinyllysine; alternate. Residue H513 is the Proton acceptor of the active site. Residue K582 is modified to N6-acetyllysine.

Belongs to the GMC oxidoreductase family. Requires FAD as cofactor. Post-translationally, acetylation of Lys-498 is observed in liver mitochondria from fasted mice but not from fed mice.

It localises to the mitochondrion inner membrane. It catalyses the reaction choline + A = betaine aldehyde + AH2. The protein operates within amine and polyamine biosynthesis; betaine biosynthesis via choline pathway; betaine aldehyde from choline (cytochrome c reductase route): step 1/1. This Mus musculus (Mouse) protein is Choline dehydrogenase, mitochondrial (Chdh).